Reading from the N-terminus, the 635-residue chain is Threonine--tRNA ligase (635 aa).

The TGS domain occupies 1 to 61 (MIQITLPDNS…DHDARLQIIT (61 aa)). The tract at residues 242–533 (DHRKLGKELD…LIEHHAGALP (292 aa)) is catalytic. Residues Cys333, His384, and His510 each contribute to the Zn(2+) site.

The protein belongs to the class-II aminoacyl-tRNA synthetase family. Homodimer. Zn(2+) serves as cofactor.

The protein localises to the cytoplasm. The catalysed reaction is tRNA(Thr) + L-threonine + ATP = L-threonyl-tRNA(Thr) + AMP + diphosphate + H(+). Catalyzes the attachment of threonine to tRNA(Thr) in a two-step reaction: L-threonine is first activated by ATP to form Thr-AMP and then transferred to the acceptor end of tRNA(Thr). Also edits incorrectly charged L-seryl-tRNA(Thr). In Variovorax paradoxus (strain S110), this protein is Threonine--tRNA ligase.